Here is a 239-residue protein sequence, read N- to C-terminus: Large ribosomal subunit protein uL3 (239 aa).

Position 151 is an N5-methylglutamine (Gln-151).

Belongs to the universal ribosomal protein uL3 family. As to quaternary structure, part of the 50S ribosomal subunit. Forms a cluster with proteins L14 and L19. In terms of processing, methylated by PrmB.

Its function is as follows. One of the primary rRNA binding proteins, it binds directly near the 3'-end of the 23S rRNA, where it nucleates assembly of the 50S subunit. The polypeptide is Large ribosomal subunit protein uL3 (Ruegeria sp. (strain TM1040) (Silicibacter sp.)).